Consider the following 268-residue polypeptide: MERYESLFAQLKERKEGAFVPFVTLGDPGIEQSLKIIDTLIEAGADALELGTPFSDPLADGPTIQNATLRAFAAGVTPAQCFEVLALIRQKHPTIPIGLLMYANLVFNKGIDEFYAECEKVGVDSVLVADVPVEESAPFRQAALRHNVAPIFICPPNADDDLLRQIASYGRGYTYLLSRAGVTGAENRAALPLNHLVAKLKEYNAAPPLQGFGISAPDQVKAAIDAGAAGAISGSAIVKIIEQHINEPEKMLAALKAFVQPMKAATRS.

Residues Glu49 and Asp60 each act as proton acceptor in the active site.

Belongs to the TrpA family. As to quaternary structure, tetramer of two alpha and two beta chains.

The catalysed reaction is (1S,2R)-1-C-(indol-3-yl)glycerol 3-phosphate + L-serine = D-glyceraldehyde 3-phosphate + L-tryptophan + H2O. Its pathway is amino-acid biosynthesis; L-tryptophan biosynthesis; L-tryptophan from chorismate: step 5/5. In terms of biological role, the alpha subunit is responsible for the aldol cleavage of indoleglycerol phosphate to indole and glyceraldehyde 3-phosphate. The polypeptide is Tryptophan synthase alpha chain (Escherichia coli O6:K15:H31 (strain 536 / UPEC)).